Here is a 238-residue protein sequence, read N- to C-terminus: MGRAFQNRKESMAKTSDQKAKVYSKYGREIYVCAKSGGIDPNGNLALRSLIDRAKKDQVPTHVIDKAIDKAKGGGGEDFDTARYEGFGPGNTMVIVDCLSDNPNRTFGDVRTCFNKVKCKIGSQGSVSHMFDHSAIFVFAGTDEEAVLEALMMADVDVTDIELEDGKVTVFAPHTDYSKAKTALTDAFGEIEFEVDEIQFVAQNTTEIQGEEVEQFDRFLDLLNDLDDVQRVYHNAEY.

This sequence belongs to the TACO1 family.

It is found in the cytoplasm. This is Probable transcriptional regulatory protein Mmwyl1_2868 from Marinomonas sp. (strain MWYL1).